A 142-amino-acid polypeptide reads, in one-letter code: Large ribosomal subunit protein uL11 (142 aa).

This sequence belongs to the universal ribosomal protein uL11 family. In terms of assembly, part of the ribosomal stalk of the 50S ribosomal subunit. Interacts with L10 and the large rRNA to form the base of the stalk. L10 forms an elongated spine to which L12 dimers bind in a sequential fashion forming a multimeric L10(L12)X complex. One or more lysine residues are methylated.

Its function is as follows. Forms part of the ribosomal stalk which helps the ribosome interact with GTP-bound translation factors. The sequence is that of Large ribosomal subunit protein uL11 from Nocardioides sp. (strain ATCC BAA-499 / JS614).